Reading from the N-terminus, the 432-residue chain is Adenylosuccinate synthetase (432 aa).

Residues 12–18 and 40–42 contribute to the GTP site; these read GDEGKGK and GHT. Residue Asp-13 is the Proton acceptor of the active site. Positions 13 and 40 each coordinate Mg(2+). Residues 13–16, 38–41, Thr-132, Arg-146, Gln-226, Thr-241, and Arg-305 each bind IMP; these read DEGK and NAGH. The active-site Proton donor is the His-41. 301–307 is a substrate binding site; it reads VVTGRKR. Residues Arg-307, 333–335, and 415–417 contribute to the GTP site; these read KLD and STS.

This sequence belongs to the adenylosuccinate synthetase family. As to quaternary structure, homodimer. It depends on Mg(2+) as a cofactor.

It is found in the cytoplasm. The catalysed reaction is IMP + L-aspartate + GTP = N(6)-(1,2-dicarboxyethyl)-AMP + GDP + phosphate + 2 H(+). It functions in the pathway purine metabolism; AMP biosynthesis via de novo pathway; AMP from IMP: step 1/2. In terms of biological role, plays an important role in the de novo pathway of purine nucleotide biosynthesis. Catalyzes the first committed step in the biosynthesis of AMP from IMP. This Rhizobium etli (strain CIAT 652) protein is Adenylosuccinate synthetase.